Here is a 924-residue protein sequence, read N- to C-terminus: Translation initiation factor IF-2 (924 aa).

The disordered stretch occupies residues 118 to 325; that stretch reads PSTAHREELA…QAPVVGGVRL (208 aa). Pro residues-rich tracts occupy residues 150 to 173 and 192 to 201; these read APHP…PGGR and IPRPPAPRPS. The span at 202–212 shows a compositional bias: low complexity; the sequence is ASPSSMSPRPG. Residues 229 to 295 are compositionally biased toward gly residues; that stretch reads RPGGGRPGAP…GAAGAFGRPG (67 aa). Residues 299-308 are compositionally biased toward basic residues; sequence RRGRKSKRQK. The 172-residue stretch at 420 to 591 folds into the tr-type G domain; that stretch reads VRPPVVTVMG…AVLLTADAAL (172 aa). The tract at residues 429–436 is G1; that stretch reads GHVDHGKT. Position 429–436 (429–436) interacts with GTP; that stretch reads GHVDHGKT. The tract at residues 454–458 is G2; the sequence is GITQH. Positions 479-482 are G3; the sequence is DTPG. GTP contacts are provided by residues 479–483 and 533–536; these read DTPGH and NKID. The G4 stretch occupies residues 533–536; sequence NKID. Residues 569–571 form a G5 region; that stretch reads SAK.

The protein belongs to the TRAFAC class translation factor GTPase superfamily. Classic translation factor GTPase family. IF-2 subfamily.

It localises to the cytoplasm. In terms of biological role, one of the essential components for the initiation of protein synthesis. Protects formylmethionyl-tRNA from spontaneous hydrolysis and promotes its binding to the 30S ribosomal subunits. Also involved in the hydrolysis of GTP during the formation of the 70S ribosomal complex. This is Translation initiation factor IF-2 from Mycobacterium leprae (strain Br4923).